A 115-amino-acid chain; its full sequence is uncharacterized protein (115 aa).

This is an uncharacterized protein from Human cytomegalovirus (strain AD169) (HHV-5).